A 110-amino-acid polypeptide reads, in one-letter code: Large ribosomal subunit protein uL24 (110 aa).

It belongs to the universal ribosomal protein uL24 family. In terms of assembly, part of the 50S ribosomal subunit.

Functionally, one of two assembly initiator proteins, it binds directly to the 5'-end of the 23S rRNA, where it nucleates assembly of the 50S subunit. In terms of biological role, one of the proteins that surrounds the polypeptide exit tunnel on the outside of the subunit. The chain is Large ribosomal subunit protein uL24 from Roseiflexus sp. (strain RS-1).